The sequence spans 246 residues: D-erythrulose reductase (246 aa).

An NADP(+)-binding site is contributed by 13 to 41 (LVTGAGKGIGRAVAVALCKAGARVTALSR). Substrate is bound at residue serine 138. The Proton acceptor role is filled by tyrosine 151. Lysine 155 is a binding site for NADP(+).

It belongs to the short-chain dehydrogenases/reductases (SDR) family. In terms of assembly, homotetramer. In terms of processing, the N-terminus is blocked. As to expression, highly expressed in kidney, and also found in high amounts in liver and testis. Low expression seen in all other tissues tested.

Its subcellular location is the cytoplasm. It carries out the reaction D-threitol + NADP(+) = D-erythrulose + NADPH + H(+). The catalysed reaction is xylitol + NADP(+) = L-xylulose + NADPH + H(+). Catalyzes the reduction of D-erythrulose to D-threitol with the concomitant oxidation of NAD(P)H to NAD(P)(+). NADH is less effective than NADPH. May also catalyze the reduction of L-xylulose. The sequence is that of D-erythrulose reductase (DER) from Gallus gallus (Chicken).